A 204-amino-acid polypeptide reads, in one-letter code: Lymphotoxin-alpha (204 aa).

The N-terminal stretch at 1-33 is a signal peptide; it reads MTPPGRLYLLRVRSAPVLLLLGLLLGLPPGAQG. Residues 62–204 form the THD domain; it reads PAAHLIGDPS…SSVFFGAFAL (143 aa). N-linked (GlcNAc...) asparagine glycosylation is present at Asn-95. A disulfide bridge links Cys-119 with Cys-155.

This sequence belongs to the tumor necrosis factor family. In terms of assembly, homotrimer, and heterotrimer of either two LTB and one LTA subunits or (less prevalent) two LTA and one LTB subunits. Interacts with TNFRSF14.

It localises to the secreted. It is found in the membrane. In terms of biological role, cytokine that in its homotrimeric form binds to TNFRSF1A/TNFR1, TNFRSF1B/TNFBR and TNFRSF14/HVEM. In its heterotrimeric form with LTB binds to TNFRSF3/LTBR. Lymphotoxin is produced by lymphocytes and is cytotoxic for a wide range of tumor cells in vitro and in vivo. In Canis lupus familiaris (Dog), this protein is Lymphotoxin-alpha (LTA).